The sequence spans 593 residues: Aspartate--tRNA(Asp/Asn) ligase (593 aa).

Position 172 (E172) interacts with L-aspartate. The interval 196–199 is aspartate; the sequence is QLFK. An L-aspartate-binding site is contributed by R218. Residues 218-220 and Q227 contribute to the ATP site; that span reads RDE. H450 is an L-aspartate binding site. Position 484 (E484) interacts with ATP. R491 lines the L-aspartate pocket. 536–539 provides a ligand contact to ATP; it reads GLDR.

The protein belongs to the class-II aminoacyl-tRNA synthetase family. Type 1 subfamily. Homodimer.

The protein localises to the cytoplasm. The enzyme catalyses tRNA(Asx) + L-aspartate + ATP = L-aspartyl-tRNA(Asx) + AMP + diphosphate. In terms of biological role, aspartyl-tRNA synthetase with relaxed tRNA specificity since it is able to aspartylate not only its cognate tRNA(Asp) but also tRNA(Asn). Reaction proceeds in two steps: L-aspartate is first activated by ATP to form Asp-AMP and then transferred to the acceptor end of tRNA(Asp/Asn). The protein is Aspartate--tRNA(Asp/Asn) ligase of Nitrosomonas europaea (strain ATCC 19718 / CIP 103999 / KCTC 2705 / NBRC 14298).